We begin with the raw amino-acid sequence, 164 residues long: UPF0114 protein YqhA (164 aa).

Transmembrane regions (helical) follow at residues 10–32, 53–75, and 136–155; these read YASR…ALAL, LILV…MVMF, and LMWY…VMGY.

It belongs to the UPF0114 family.

It localises to the cell membrane. In Shigella flexneri, this protein is UPF0114 protein YqhA.